Reading from the N-terminus, the 155-residue chain is Small ribosomal subunit protein bS6 (155 aa).

The segment at 94-155 is disordered; that stretch reads VKQEGPLPTP…TPELEEQVKS (62 aa). Polar residues predominate over residues 103-112; sequence PRSSNKSSNQ. The span at 113 to 141 shows a compositional bias: basic and acidic residues; sequence AEKKENENIDSANKSEPKADETDNKKKIT.

The protein belongs to the bacterial ribosomal protein bS6 family.

Functionally, binds together with bS18 to 16S ribosomal RNA. The chain is Small ribosomal subunit protein bS6 from Prochlorococcus marinus (strain MIT 9515).